A 455-amino-acid polypeptide reads, in one-letter code: Epoxide hydrolase 1 (455 aa).

A helical; Signal-anchor for type III membrane protein membrane pass occupies residues 1–21 (MWLELILASVLGFVIYWFVSR). Residues 22–455 (DKEETLPLED…RKFVSLAELQ (434 aa)) lie on the Cytoplasmic side of the membrane. Asp226 functions as the Nucleophile in the catalytic mechanism. A Dimethylated arginine modification is found at Arg295. Tyr374 functions as the Proton donor in the catalytic mechanism. Catalysis depends on His431, which acts as the Proton acceptor. Residue Lys439 is modified to N6-acetyllysine.

This sequence belongs to the peptidase S33 family.

The protein resides in the microsome membrane. The protein localises to the endoplasmic reticulum membrane. It catalyses the reaction cis-stilbene oxide + H2O = (1R,2R)-hydrobenzoin. It carries out the reaction 1-(4-methoxyphenyl)-N-methyl-N-[(3-methyloxetan-3-yl)methyl]methanamine + H2O = 2-{[(4-methoxybenzyl)(methyl)amino]methyl}-2-methylpropane-1,3-diol. The enzyme catalyses 8,9-epoxy-(5Z,11Z,14Z)-eicosatrienoate + H2O = 8,9-dihydroxy-(5Z,11Z,14Z)-eicosatrienoate. The catalysed reaction is 11,12-epoxy-(5Z,8Z,14Z)-eicosatrienoate + H2O = 11,12-dihydroxy-(5Z,8Z,14Z)-eicosatrienoate. It catalyses the reaction 2-(5Z,8Z,11Z,14Z-eicosatetraenoyl)-glycerol + H2O = glycerol + (5Z,8Z,11Z,14Z)-eicosatetraenoate + H(+). Inhibited by 10-hydroxystearamide and methoxy-arachidonyl fluorophosphate. Functionally, biotransformation enzyme that catalyzes the hydrolysis of arene and aliphatic epoxides to less reactive and more water soluble dihydrodiols by the trans addition of water. May play a role in the metabolism of endogenous lipids such as epoxide-containing fatty acids. Metabolizes the abundant endocannabinoid 2-arachidonoylglycerol (2-AG) to free arachidonic acid (AA) and glycerol. Binds 20(S)-hydroxycholesterol (20(S)-OHC). The chain is Epoxide hydrolase 1 from Mus musculus (Mouse).